Here is a 362-residue protein sequence, read N- to C-terminus: Ribosomal RNA large subunit methyltransferase M (362 aa).

S-adenosyl-L-methionine contacts are provided by residues serine 194, 227 to 230, aspartate 246, aspartate 266, and aspartate 284; that span reads CPGG. Catalysis depends on lysine 313, which acts as the Proton acceptor.

It belongs to the class I-like SAM-binding methyltransferase superfamily. RNA methyltransferase RlmE family. RlmM subfamily. As to quaternary structure, monomer.

It is found in the cytoplasm. It carries out the reaction cytidine(2498) in 23S rRNA + S-adenosyl-L-methionine = 2'-O-methylcytidine(2498) in 23S rRNA + S-adenosyl-L-homocysteine + H(+). Functionally, catalyzes the 2'-O-methylation at nucleotide C2498 in 23S rRNA. The polypeptide is Ribosomal RNA large subunit methyltransferase M (Aggregatibacter aphrophilus (strain NJ8700) (Haemophilus aphrophilus)).